A 545-amino-acid polypeptide reads, in one-letter code: Spermatogenesis-associated serine-rich protein 2 (545 aa).

Residues 87–96 show a composition bias toward basic residues; that stretch reads KKNKKKKSKP. The interval 87-133 is disordered; that stretch reads KKNKKKKSKPKPASEASGSAPDSSKSAPIQEEQPASSEKGSINGYHV. Low complexity predominate over residues 97–107; the sequence is KPASEASGSAP. Polar residues predominate over residues 108–126; the sequence is DSSKSAPIQEEQPASSEKG. Residues S142, S145, and S147 each carry the phosphoserine modification. Disordered regions lie at residues 202-232 and 390-545; these read RNAA…STNK and VSLS…AANS. A compositionally biased stretch (low complexity) spans 391 to 413; sequence SLSGPSDGSAASSSPDASVPSLP. The segment covering 455–464 has biased composition (polar residues); sequence RAQSQKTADP. Phosphoserine is present on S520.

Belongs to the SPATS2 family. Detected in testis, in spermatocytes and round spermatids (at protein level). Highly expressed in testis, and detected at lower levels in brain, heart, thymus, skeletal muscle, ovary, stomach and lung.

The protein resides in the cytoplasm. This chain is Spermatogenesis-associated serine-rich protein 2 (Spats2), found in Mus musculus (Mouse).